Consider the following 119-residue polypeptide: Large ribosomal subunit protein uL18 (119 aa).

It belongs to the universal ribosomal protein uL18 family. In terms of assembly, part of the 50S ribosomal subunit; part of the 5S rRNA/L5/L18/L25 subcomplex. Contacts the 5S and 23S rRNAs.

Functionally, this is one of the proteins that bind and probably mediate the attachment of the 5S RNA into the large ribosomal subunit, where it forms part of the central protuberance. This chain is Large ribosomal subunit protein uL18, found in Ruegeria pomeroyi (strain ATCC 700808 / DSM 15171 / DSS-3) (Silicibacter pomeroyi).